A 397-amino-acid chain; its full sequence is Phosphoglycerate kinase (397 aa).

Residues Asp-21–Asn-23, Arg-37, His-60–Arg-63, Arg-119, and Arg-152 contribute to the substrate site. ATP-binding positions include Lys-203, Gly-294, Glu-325, and Gly-354–Ser-357.

The protein belongs to the phosphoglycerate kinase family. In terms of assembly, monomer.

Its subcellular location is the cytoplasm. The catalysed reaction is (2R)-3-phosphoglycerate + ATP = (2R)-3-phospho-glyceroyl phosphate + ADP. It participates in carbohydrate degradation; glycolysis; pyruvate from D-glyceraldehyde 3-phosphate: step 2/5. This chain is Phosphoglycerate kinase, found in Chlorobium phaeovibrioides (strain DSM 265 / 1930) (Prosthecochloris vibrioformis (strain DSM 265)).